Reading from the N-terminus, the 315-residue chain is Taste receptor type 2 member 3 (315 aa).

The Extracellular portion of the chain corresponds to 1–5 (MGLTE). The chain crosses the membrane as a helical span at residues 6-26 (GVFLILSGTQFTLGILVNCFI). Over 27-41 (ELVNGSSWFKTKRMS) the chain is Cytoplasmic. A helical membrane pass occupies residues 42–62 (LSDFIITTLALLRIILLCIIL). The Extracellular segment spans residues 63-93 (TDSFLIEFSPNTHDSGIIMQIIDVSWTFTNH). A helical membrane pass occupies residues 94–114 (LSIWLATCLGVLYCLKIASFS). Residues 115-127 (HPTFLWLKWRVSR) are Cytoplasmic-facing. The chain crosses the membrane as a helical span at residues 128–148 (VMVWMLLGALLLSCGSTASLI). Over 149–185 (NEFKLYSVFRGIEATRNVTEHFRKKRSEYYLIHVLGT) the chain is Extracellular. An N-linked (GlcNAc...) asparagine glycan is attached at asparagine 165. The chain crosses the membrane as a helical span at residues 186–206 (LWYLPPLIVSLASYSLLIFSL). The Cytoplasmic portion of the chain corresponds to 207 to 233 (GRHTRQMLQNGTSSRDPTTEAHKRAIR). Residues 234–254 (IILSFFFLFLLYFLAFLIASF) form a helical membrane-spanning segment. Residues 255-265 (GNFLPKTKMAK) lie on the Extracellular side of the membrane. The chain crosses the membrane as a helical span at residues 266–286 (MIGEVMTMFYPAGHSFILILG). Topologically, residues 287–315 (NSKLKQTFVVMLRCESGHLKPGSKGPIFS) are cytoplasmic.

The protein belongs to the G-protein coupled receptor T2R family.

Its subcellular location is the membrane. Gustducin-coupled receptor implicated in the perception of bitter compounds in the oral cavity and the gastrointestinal tract. Signals through PLCB2 and the calcium-regulated cation channel TRPM5. In Gorilla gorilla gorilla (Western lowland gorilla), this protein is Taste receptor type 2 member 3 (TAS2R3).